Here is a 238-residue protein sequence, read N- to C-terminus: Protein E6 (238 aa).

The span at Lys-40 to Thr-51 shows a compositional bias: basic and acidic residues. 2 disordered regions span residues Lys-40 to Glu-64 and Glu-210 to Pro-238. Acidic residues predominate over residues Glu-227–Pro-238.

As to expression, it is predominantly expressed in fiber cells.

It is found in the secreted. The protein resides in the cell wall. This Gossypium hirsutum (Upland cotton) protein is Protein E6 (E6).